A 95-amino-acid chain; its full sequence is Small ribosomal subunit protein bS18 (95 aa).

The protein belongs to the bacterial ribosomal protein bS18 family. As to quaternary structure, part of the 30S ribosomal subunit. Forms a tight heterodimer with protein bS6.

Functionally, binds as a heterodimer with protein bS6 to the central domain of the 16S rRNA, where it helps stabilize the platform of the 30S subunit. The protein is Small ribosomal subunit protein bS18 of Rickettsia africae (strain ESF-5).